The primary structure comprises 351 residues: Peptide chain release factor 1 (351 aa).

Gln-233 carries the N5-methylglutamine modification.

This sequence belongs to the prokaryotic/mitochondrial release factor family. Post-translationally, methylated by PrmC. Methylation increases the termination efficiency of RF1.

Its subcellular location is the cytoplasm. Its function is as follows. Peptide chain release factor 1 directs the termination of translation in response to the peptide chain termination codons UAG and UAA. The chain is Peptide chain release factor 1 (prfA) from Treponema pallidum (strain Nichols).